The sequence spans 786 residues: von Willebrand factor A domain-containing protein 5A (786 aa).

A VIT domain is found at 1-131; the sequence is MVHFCGLLTL…KAAVTLKYVQ (131 aa). The region spanning 281-462 is the VWFA domain; sequence EFIFLMDRSG…KALRTLKRSL (182 aa).

In terms of tissue distribution, expressed at low level in many tissues. Not expressed in 80% of tumor cell lines tested.

Functionally, may play a role in tumorigenesis as a tumor suppressor. Altered expression of this protein and disruption of the molecular pathway it is involved in, may contribute directly to or modify tumorigenesis. The chain is von Willebrand factor A domain-containing protein 5A (VWA5A) from Homo sapiens (Human).